The sequence spans 270 residues: Orotidine 5'-phosphate decarboxylase (270 aa).

K89 acts as the Proton donor in catalysis.

It belongs to the OMP decarboxylase family. Type 2 subfamily.

The enzyme catalyses orotidine 5'-phosphate + H(+) = UMP + CO2. It functions in the pathway pyrimidine metabolism; UMP biosynthesis via de novo pathway; UMP from orotate: step 2/2. This is Orotidine 5'-phosphate decarboxylase from Dehalococcoides mccartyi (strain ATCC BAA-2266 / KCTC 15142 / 195) (Dehalococcoides ethenogenes (strain 195)).